We begin with the raw amino-acid sequence, 425 residues long: Serine--tRNA ligase (425 aa).

Thr233–Glu235 contributes to the L-serine binding site. Position 264–266 (Arg264–Glu266) interacts with ATP. Glu287 contacts L-serine. An ATP-binding site is contributed by Glu351–Ser354. Ser387 contacts L-serine.

This sequence belongs to the class-II aminoacyl-tRNA synthetase family. Type-1 seryl-tRNA synthetase subfamily. Homodimer. The tRNA molecule binds across the dimer.

The protein resides in the cytoplasm. It catalyses the reaction tRNA(Ser) + L-serine + ATP = L-seryl-tRNA(Ser) + AMP + diphosphate + H(+). It carries out the reaction tRNA(Sec) + L-serine + ATP = L-seryl-tRNA(Sec) + AMP + diphosphate + H(+). It functions in the pathway aminoacyl-tRNA biosynthesis; selenocysteinyl-tRNA(Sec) biosynthesis; L-seryl-tRNA(Sec) from L-serine and tRNA(Sec): step 1/1. Functionally, catalyzes the attachment of serine to tRNA(Ser). Is also able to aminoacylate tRNA(Sec) with serine, to form the misacylated tRNA L-seryl-tRNA(Sec), which will be further converted into selenocysteinyl-tRNA(Sec). This is Serine--tRNA ligase from Thermotoga petrophila (strain ATCC BAA-488 / DSM 13995 / JCM 10881 / RKU-1).